A 510-amino-acid chain; its full sequence is MKNADILVLDFGSQYTQLIARRLREQGVYAELMPFNVSIEAIKAKNPKGIILSGGPASVYAKDAYFCDEGVFTLGLPVLGICYGMQLLAHKNGADVAPAGHKEYGKANLNIVKKCDFFKGVPDTSVVWMSHSDKVNELPQGFEVLANSENSEFCVFANLDKKLYALQFHPEVAHSEFGDTMLKNFAKICGCESTWNMGSFAKKEVQAIREKVGNDKVLCAVSGGVDSSVVAALLAHAIPDNLIVVFVDNGLLRTNEAKQVEEMFKLKLGVNLISIDASELFLSRLKGVRDPEKKRKIIGETFIEVFDKEAKKHSNVKYLAQGTLYTDVIESSVVGSSKTIKSHHNVGGLPEWMEFELIEPLREIFKDEVRRLGLELGLSRDIVYRHPFPGPGLAIRIMGEVNTSSLELLRKADVILREELKSSGWYDKTWQAFCVLLNVNSVGVMGDNRTYENAVCLRVVDASDGMTASFSRLPYDLLENCSRRIINEVDGINRVVYDISSKPPATIEWE.

The Glutamine amidotransferase type-1 domain maps to 5–194; sequence DILVLDFGSQ…FAKICGCEST (190 aa). Catalysis depends on Cys82, which acts as the Nucleophile. Catalysis depends on residues His169 and Glu171. The GMPS ATP-PPase domain occupies 195–385; sequence WNMGSFAKKE…LGLSRDIVYR (191 aa). ATP is bound at residue 222–228; that stretch reads SGGVDSS.

As to quaternary structure, homodimer.

The catalysed reaction is XMP + L-glutamine + ATP + H2O = GMP + L-glutamate + AMP + diphosphate + 2 H(+). It participates in purine metabolism; GMP biosynthesis; GMP from XMP (L-Gln route): step 1/1. Its function is as follows. Catalyzes the synthesis of GMP from XMP. This chain is GMP synthase [glutamine-hydrolyzing], found in Campylobacter fetus subsp. fetus (strain 82-40).